The sequence spans 943 residues: Glutamate receptor ionotropic, NMDA 1 (943 aa).

The first 20 residues, 1–20 (MSTMRLLTLALLFSCSFARA), serve as a signal peptide directing secretion. Over 21 to 580 (ACDPKIVNIG…TLDSFMQPFQ (560 aa)) the chain is Extracellular. Asparagine 61, asparagine 224, asparagine 260, asparagine 297, asparagine 321, asparagine 371, asparagine 389, asparagine 461, asparagine 492, and asparagine 512 each carry an N-linked (GlcNAc...) asparagine glycan. Cysteines 79 and 329 form a disulfide. 2 cysteine pairs are disulfide-bonded: cysteine 441-cysteine 475 and cysteine 457-cysteine 476. 3 residues coordinate glycine: proline 537, threonine 539, and arginine 544. The helical transmembrane segment at 581-601 (STLWLLVGLSVHVVAVMLYLL) threads the bilayer. Residues 602–623 (DRFSPFGRFKVNSEEEEEDALT) lie on the Cytoplasmic side of the membrane. Positions 624 to 645 (LSSAMWFSWGVLLNSGIGEGAP) form an intramembrane region, discontinuously helical. The segment at 624–645 (LSSAMWFSWGVLLNSGIGEGAP) is pore-forming. At 646 to 651 (RSFSAR) the chain is on the cytoplasmic side. Residues 652–668 (ILGMVWAGFAMIIVASY) form a helical membrane-spanning segment. The Extracellular portion of the chain corresponds to 669-833 (TANLAAFLVL…NAPATLTFEN (165 aa)). N-linked (GlcNAc...) asparagine glycosylation is present at asparagine 695. Glycine contacts are provided by serine 709 and aspartate 753. Residues cysteine 765 and cysteine 819 are joined by a disulfide bond. A glycan (N-linked (GlcNAc...) asparagine) is linked at asparagine 792. The chain crosses the membrane as a helical span at residues 834–854 (MAGVFMLVAGGIVAGIFLIFI). The Cytoplasmic segment spans residues 855–943 (EIAYKRHKDA…LSDPSVSTVV (89 aa)). 4 positions are modified to phosphoserine: serine 910, serine 911, serine 917, and serine 918.

This sequence belongs to the glutamate-gated ion channel (TC 1.A.10.1) family. NR1/GRIN1 subfamily. Heterotetramer; the NMDAR subunits are modular and harbor tiered domains that function in concert to regulate opening and closing of the cation-selective ion channel pore. Forms heterotetrameric channels composed of two GluN1/zeta subunits (GRIN1), and two identical GluN2/epsilon subunits (GRIN2A, GRIN2B, GRIN2C or GRIN2D) or GluN3 subunits (GRIN3A or GRIN3B) (in vitro). Can also form heterotetrameric channels that contain at least two GluN1 subunits and at least two different GluN2 subunits (or a combination of one GluN2 and one GluN3 subunits) (in vitro). In vivo, the subunit composition may vary in function of the expression levels of the different subunits. Found in a complex with GRIN2A or GRIN2B, GRIN3A and PPP2CB. Found in a complex with GRIN2A or GRIN2B and GRIN3B. Interacts with SNX27 (via PDZ domain); the interaction is required for recycling to the plasma membrane when endocytosed and prevent degradation in lysosomes. Interacts with DLG4 and MPDZ. Interacts with LRFN1 and LRFN2. Interacts with MYZAP. Found in a complex with DLG4 and PRR7. Found in a complex with GRIN2B and PRR7. Interacts with PRR7; the interaction is reduced following NMDA receptor activity. NMDA is probably regulated by C-terminal phosphorylation of an isoform of GRIN1 by PKC. Dephosphorylated on Ser-897 probably by protein phosphatase 2A (PPP2CB). Its phosphorylated state is influenced by the formation of the NMDAR-PPP2CB complex and the NMDAR channel activity.

The protein resides in the cell membrane. It is found in the postsynaptic cell membrane. Its subcellular location is the postsynaptic density membrane. The protein localises to the synaptic cell membrane. It catalyses the reaction Ca(2+)(in) = Ca(2+)(out). The enzyme catalyses Na(+)(in) = Na(+)(out). The catalysed reaction is K(+)(in) = K(+)(out). Its function is as follows. Component of N-methyl-D-aspartate (NMDA) receptors (NMDARs) that function as heterotetrameric, ligand-gated cation channels with high calcium permeability and voltage-dependent block by Mg(2+). NMDARs participate in synaptic plasticity for learning and memory formation by contributing to the long-term potentiation (LTP). Channel activation requires binding of the neurotransmitter L-glutamate to the GluN2 subunit, glycine or D-serine binding to the GluN1 subunit, plus membrane depolarization to eliminate channel inhibition by Mg(2+). NMDARs mediate simultaneously the potasium efflux and the influx of calcium and sodium. Each GluN2 or GluN3 subunit confers differential attributes to channel properties, including activation, deactivation and desensitization kinetics, pH sensitivity, Ca2(+) permeability, and binding to allosteric modulators. The GluN3 subunits confer distinctive ion channel activation mechanism, which relies exclusively on glycine and does not involve glutamate. This chain is Glutamate receptor ionotropic, NMDA 1, found in Canis lupus familiaris (Dog).